Here is a 149-residue protein sequence, read N- to C-terminus: 3-dehydroquinate dehydratase (149 aa).

The Proton acceptor role is filled by Tyr26. 3 residues coordinate substrate: Asn78, His84, and Asp91. Residue His104 is the Proton donor of the active site. Residues 105-106 and Arg115 each bind substrate; that span reads LS.

This sequence belongs to the type-II 3-dehydroquinase family. In terms of assembly, homododecamer.

It catalyses the reaction 3-dehydroquinate = 3-dehydroshikimate + H2O. It functions in the pathway metabolic intermediate biosynthesis; chorismate biosynthesis; chorismate from D-erythrose 4-phosphate and phosphoenolpyruvate: step 3/7. Its function is as follows. Catalyzes a trans-dehydration via an enolate intermediate. The protein is 3-dehydroquinate dehydratase of Polynucleobacter asymbioticus (strain DSM 18221 / CIP 109841 / QLW-P1DMWA-1) (Polynucleobacter necessarius subsp. asymbioticus).